The primary structure comprises 307 residues: Aspartate carbamoyltransferase catalytic subunit (307 aa).

Positions 59 and 60 each coordinate carbamoyl phosphate. Lysine 87 lines the L-aspartate pocket. Arginine 109, histidine 137, and glutamine 140 together coordinate carbamoyl phosphate. Residues arginine 173 and arginine 223 each coordinate L-aspartate. Carbamoyl phosphate contacts are provided by glycine 266 and proline 267.

It belongs to the aspartate/ornithine carbamoyltransferase superfamily. ATCase family. As to quaternary structure, heterododecamer (2C3:3R2) of six catalytic PyrB chains organized as two trimers (C3), and six regulatory PyrI chains organized as three dimers (R2).

It catalyses the reaction carbamoyl phosphate + L-aspartate = N-carbamoyl-L-aspartate + phosphate + H(+). It participates in pyrimidine metabolism; UMP biosynthesis via de novo pathway; (S)-dihydroorotate from bicarbonate: step 2/3. Its function is as follows. Catalyzes the condensation of carbamoyl phosphate and aspartate to form carbamoyl aspartate and inorganic phosphate, the committed step in the de novo pyrimidine nucleotide biosynthesis pathway. This chain is Aspartate carbamoyltransferase catalytic subunit, found in Helicobacter pylori (strain HPAG1).